Consider the following 299-residue polypeptide: Coenzyme PQQ synthesis protein B (299 aa).

The protein belongs to the PqqB family.

It functions in the pathway cofactor biosynthesis; pyrroloquinoline quinone biosynthesis. Its function is as follows. May be involved in the transport of PQQ or its precursor to the periplasm. This chain is Coenzyme PQQ synthesis protein B, found in Methylobacterium nodulans (strain LMG 21967 / CNCM I-2342 / ORS 2060).